Here is a 546-residue protein sequence, read N- to C-terminus: Sulfite oxidase, mitochondrial (546 aa).

Residues 1 to 80 (MLLQLYRSVV…YHEHRCRASQ (80 aa)) constitute a mitochondrion transit peptide. The Cytochrome b5 heme-binding domain maps to 83 to 162 (PRMYSKEDVR…LAEYKIGELN (80 aa)). His119 is a heme b binding site. Ser124 bears the Phosphoserine mark. Heme b contacts are provided by His144, Gln146, and His148. Residues 166–175 (SMSPSVEASD) are hinge. The tract at residues 176–402 (PYADDPIRHP…YSHWQRRDYK (227 aa)) is moco domain. Mo-molybdopterin contacts are provided by residues 216–220 (FTRNH), Cys265, Asp323, His362, Arg367, and 378–380 (HVK). Residues 403–539 (GFSPSVDWDT…RGVLSNAWHR (137 aa)) are homodimerization.

In terms of assembly, homodimer. Heme b serves as cofactor. It depends on Mo-molybdopterin as a cofactor.

The protein localises to the mitochondrion intermembrane space. It catalyses the reaction sulfite + O2 + H2O = sulfate + H2O2. Its pathway is energy metabolism; sulfur metabolism. Functionally, catalyzes the oxidation of sulfite to sulfate, the terminal reaction in the oxidative degradation of sulfur-containing amino acids. This is Sulfite oxidase, mitochondrial (Suox) from Mus musculus (Mouse).